The sequence spans 493 residues: Cysteine--tRNA ligase (493 aa).

Cysteine 29 lines the Zn(2+) pocket. The 'HIGH' region signature appears at 31–41; it reads ATVQSEPHIGH. Positions 214, 239, and 243 each coordinate Zn(2+). Residues 270–274 carry the 'KMSKS' region motif; sequence KMSKS. Lysine 273 provides a ligand contact to ATP.

Belongs to the class-I aminoacyl-tRNA synthetase family. As to quaternary structure, monomer. The cofactor is Zn(2+).

It is found in the cytoplasm. The enzyme catalyses tRNA(Cys) + L-cysteine + ATP = L-cysteinyl-tRNA(Cys) + AMP + diphosphate. The polypeptide is Cysteine--tRNA ligase (Renibacterium salmoninarum (strain ATCC 33209 / DSM 20767 / JCM 11484 / NBRC 15589 / NCIMB 2235)).